A 334-amino-acid polypeptide reads, in one-letter code: Ketol-acid reductoisomerase (NADP(+)) (334 aa).

One can recognise a KARI N-terminal Rossmann domain in the interval 2–181; it reads TKVYYDQSVE…GATRAGVIET (180 aa). Residues 25-28, R48, S52, and 82-85 each bind NADP(+); these read YGSQ and DEIQ. The active site involves H107. G133 contacts NADP(+). A KARI C-terminal knotted domain is found at 182–327; that stretch reads TFKEETETDL…RELRKMMPFI (146 aa). The Mg(2+) site is built by D190, E194, E226, and E230. Residue S251 coordinates substrate.

The protein belongs to the ketol-acid reductoisomerase family. Mg(2+) serves as cofactor.

It carries out the reaction (2R)-2,3-dihydroxy-3-methylbutanoate + NADP(+) = (2S)-2-acetolactate + NADPH + H(+). The enzyme catalyses (2R,3R)-2,3-dihydroxy-3-methylpentanoate + NADP(+) = (S)-2-ethyl-2-hydroxy-3-oxobutanoate + NADPH + H(+). The protein operates within amino-acid biosynthesis; L-isoleucine biosynthesis; L-isoleucine from 2-oxobutanoate: step 2/4. It functions in the pathway amino-acid biosynthesis; L-valine biosynthesis; L-valine from pyruvate: step 2/4. Involved in the biosynthesis of branched-chain amino acids (BCAA). Catalyzes an alkyl-migration followed by a ketol-acid reduction of (S)-2-acetolactate (S2AL) to yield (R)-2,3-dihydroxy-isovalerate. In the isomerase reaction, S2AL is rearranged via a Mg-dependent methyl migration to produce 3-hydroxy-3-methyl-2-ketobutyrate (HMKB). In the reductase reaction, this 2-ketoacid undergoes a metal-dependent reduction by NADPH to yield (R)-2,3-dihydroxy-isovalerate. This is Ketol-acid reductoisomerase (NADP(+)) from Staphylococcus haemolyticus (strain JCSC1435).